The chain runs to 103 residues: Large ribosomal subunit protein bL21 (103 aa).

The protein belongs to the bacterial ribosomal protein bL21 family. Part of the 50S ribosomal subunit. Contacts protein L20.

This protein binds to 23S rRNA in the presence of protein L20. This chain is Large ribosomal subunit protein bL21, found in Pseudomonas syringae pv. tomato (strain ATCC BAA-871 / DC3000).